Consider the following 420-residue polypeptide: UPF0229 protein LPC_3097 (420 aa).

The disordered stretch occupies residues I83–E107. Positions P91–G100 are enriched in gly residues.

The protein belongs to the UPF0229 family.

The protein is UPF0229 protein LPC_3097 of Legionella pneumophila (strain Corby).